A 179-amino-acid chain; its full sequence is Ubiquitin-conjugating enzyme E2 C (179 aa).

Residues 1 to 14 (MASQNRDPAATSVT) show a composition bias toward polar residues. The interval 1-31 (MASQNRDPAATSVTAARKGAEPSGGAARGPV) is disordered. Ala2 carries the post-translational modification N-acetylalanine. Position 3 is a phosphoserine (Ser3). The UBC core domain maps to 30–175 (PVGKRLQQEL…LQETYSKQVT (146 aa)). Cys114 serves as the catalytic Glycyl thioester intermediate.

It belongs to the ubiquitin-conjugating enzyme family. In terms of assembly, component of the APC/C complex, composed of at least 14 distinct subunits that assemble into a complex of at least 19 chains with a combined molecular mass of around 1.2 MDa. Within this complex, directly interacts with ANAPC2. In terms of processing, autoubiquitinated by the APC/C complex, leading to its degradation by the proteasome. Its degradation plays a central role in APC/C regulation, allowing cyclin-A accumulation before S phase entry. APC/C substrates inhibit the autoubiquitination of UBE2C/UBCH10 but not its E2 function, hence APC/C remaining active until its substrates have been destroyed.

It carries out the reaction S-ubiquitinyl-[E1 ubiquitin-activating enzyme]-L-cysteine + [E2 ubiquitin-conjugating enzyme]-L-cysteine = [E1 ubiquitin-activating enzyme]-L-cysteine + S-ubiquitinyl-[E2 ubiquitin-conjugating enzyme]-L-cysteine.. The enzyme catalyses S-ubiquitinyl-[E1 ubiquitin-activating enzyme]-L-cysteine + [acceptor protein]-L-lysine = [E1 ubiquitin-activating enzyme]-L-cysteine + N(6)-monoubiquitinyl-[acceptor protein]-L-lysine.. It functions in the pathway protein modification; protein ubiquitination. Its function is as follows. Accepts ubiquitin from the E1 complex and catalyzes its covalent attachment to other proteins. In vitro catalyzes 'Lys-11'- and 'Lys-48'-linked polyubiquitination. Acts as an essential factor of the anaphase promoting complex/cyclosome (APC/C), a cell cycle-regulated ubiquitin ligase that controls progression through mitosis. Acts by initiating 'Lys-11'-linked polyubiquitin chains on APC/C substrates, leading to the degradation of APC/C substrates by the proteasome and promoting mitotic exit. This chain is Ubiquitin-conjugating enzyme E2 C (UBE2C), found in Macaca fascicularis (Crab-eating macaque).